The chain runs to 1732 residues: Transient receptor potential cation channel subfamily M member 3 (1732 aa).

The Cytoplasmic segment spans residues 1 to 894; it reads MPEPWGTVYF…RKIYEFYNAP (894 aa). Calmodulin-binding stretches follow at residues 192-215, 300-323, 601-624, and 793-816; these read NFEL…MTTG, TGKY…QKIN, RKRF…KLLG, and RKNS…LEFK. Residues 617-625 are required for the inhibitory action of G-beta/gamma-subunits of heterotrimeric G-proteins; it reads PKALKLLGM. Ser796 serves as a coordination point for 1,2-dioctanoyl-sn-glycero-3-phospho-(1D-myo-inositol-4,5-bisphosphate). A helical transmembrane segment spans residues 895–918; the sequence is IVKFWFYTLAYIGYLMLFNYIVLV. Over 919-925 the chain is Extracellular; it reads KMERWPS. Residues 926–948 form a helical membrane-spanning segment; sequence TQEWIVISYIFTLGIEKMREILM. Residues 949 to 964 lie on the Cytoplasmic side of the membrane; the sequence is SEPGKLLQKVKVWLQE. Residues 965–985 traverse the membrane as a helical segment; that stretch reads YWNVTDLIAILLFSVGMILRL. The Extracellular portion of the chain corresponds to 986-989; the sequence is QDQP. The chain crosses the membrane as a helical span at residues 990-1013; the sequence is FRSDGRVIYCVNIIYWYIRLLDIF. The Cytoplasmic portion of the chain corresponds to 1014–1028; sequence GVNKYLGPYVMMIGK. 2 residues coordinate 1,2-dioctanoyl-sn-glycero-3-phospho-(1D-myo-inositol-4,5-bisphosphate): Lys1017 and Tyr1018. The chain crosses the membrane as a helical span at residues 1029-1056; it reads MMIDMMYFVIIMLVVLMSFGVARQAILF. The Extracellular segment spans residues 1057–1111; the sequence is PNEEPSWKLAKNIFYMPYWMIYGEVFADQIDPPCGQNETREDGKIIQLPPCKTGA. A helical membrane pass occupies residues 1112 to 1137; that stretch reads WIVPAIMACYLLVANILLVNLLIAVF. Topologically, residues 1138–1732 are cytoplasmic; sequence NNTFFEVKSI…AFQSFESKHN (595 aa). Residues 1241–1301 are a coiled coil; it reads ERIRVTSERV…LERLTGLERA (61 aa). The segment covering 1459-1476 has biased composition (low complexity); that stretch reads PVPSTAPSSSAYATLAPT. 2 disordered regions span residues 1459–1478 and 1611–1732; these read PVPS…PTDR and REAE…SKHN. Composition is skewed to polar residues over residues 1635–1653, 1690–1701, and 1720–1732; these read AISS…NNIT, NTASLRNPFQRS, and RTSA…SKHN.

The protein belongs to the transient receptor (TC 1.A.4) family. LTrpC subfamily. TRPM3 sub-subfamily. In terms of assembly, homotetramer. Interacts with TRPM1; the interaction results in the formation of a heteromultimeric cation channel complex that are functionally different from the homomeric channels. As to expression, expressed primarily in the kidney and, at lower levels, in brain, testis, ovary, pancreas and spinal cord. Expression in the brain and kidney was determined at protein level. In the kidney, expressed predominantly in the collecting tubular epithelium in the medulla, medullary rays, and periglomerular regions; in the brain, highest levels are found in the cerebellum, choroid plexus, the locus coeruleus, the posterior thalamus and the substantia nigra. Down-regulated in renal tumors compared to normal kidney. Expressed in the lens.

It is found in the cell membrane. It catalyses the reaction Ca(2+)(in) = Ca(2+)(out). The enzyme catalyses Mn(2+)(in) = Mn(2+)(out). The catalysed reaction is Zn(2+)(in) = Zn(2+)(out). It carries out the reaction Mg(2+)(in) = Mg(2+)(out). Its activity is regulated as follows. Activated by the neurosteroid pregnelonone sulfate (PregS); PregS activates the channel by shifting its current-voltage activation curve toward more negative membrane potentials and also potentiates temperature-induced activation. Activated by sphingosine. Activated by heat. Intracellular Ca(2+) inhibits TRPM3 probably via interaction with Ca(2+)/calmodulin. Intracellular Mg(2+) inhibits TRPM3 activity. Both intracellular and extracellular protons block TRPM3 through propable binding sites in the pore region. Positively regulated by phosphoinositide phosphoinositol 4,5-biphosphate (PI(4,5)P2). Strongly inhibited by activation of G(i)-coupled receptors via direct binding with G-betagamma-subunits of heterotrimeric G-proteins. In terms of biological role, constitutively active, non-selective divalent cation-conducting channel that is permeable to Ca(2+), Mn(2+), and Mg(2+), with a high permeability for Ca(2+). However, can be enhanced by increasing temperature and by ligands, including the endogenous neurosteroid pregnenolone sulfate and sphingosine-1 and suppressed by intracellular Mg(2+). Implicated in a variety of cellular processes, including insulin/peptide secretion, vascular constriction and dilation, noxious heat sensing, inflammatory and spontaneous pain sensitivity. In neurons of the dorsal root ganglia, functions as thermosensitive channel for the detection of noxious heat and spontaneous pain. Suggested to function as an ionotropic steroid receptor in beta-cell, indeed pregnenolone sulfate leads to Ca(2+) influx and enhanced insulin secretion. Mediates Zn(2+) uptake into the lumen of pancreatic beta cell secretory granules, thereby regulating insulin secretion. Forms heteromultimeric ion channels with TRPM1 which are permeable for Ca(2+) and Zn(2+) ions. Exists as multiple splice variants which differ significantly in their biophysical properties. The polypeptide is Transient receptor potential cation channel subfamily M member 3 (Homo sapiens (Human)).